Reading from the N-terminus, the 373-residue chain is SUN domain-containing protein 5 (373 aa).

The Nuclear segment spans residues 1–103 (MPRTRNIGAL…LFCQKVMEKM (103 aa)). The helical transmembrane segment at 104-120 (GLLVLCVFGFWMFSMHL) threads the bilayer. Residues 121-373 (PSKVEVWQDD…PKDSHLEPLS (253 aa)) lie on the Perinuclear space side of the membrane. A coiled-coil region spans residues 136 to 180 (LQSLRMYQEKVRHHTGEIQDLRGSMNQLIAKLQKMEAISDEQKMA). Residues 204–362 (ASIDFEHTSA…YRVRVHGSVT (159 aa)) enclose the SUN domain.

In terms of assembly, probable homotrimer. Interacts with DNAJB13. Highly glycosylated in the Golgi apparatus during spermiogenesis. As to expression, testis-specific, abundantly expressed in spermatocytes and round spermatids.

The protein localises to the nucleus inner membrane. The protein resides in the golgi apparatus. In terms of biological role, plays an essential role in anchoring sperm head to the tail. Is responsible for the attachment of the coupling apparatus to the sperm nuclear envelope. In Mus musculus (Mouse), this protein is SUN domain-containing protein 5 (Sun5).